The chain runs to 298 residues: Bifunctional protein FolD (298 aa).

Residues Gly-166–Ser-168, Ser-191, and Ile-232 each bind NADP(+).

Belongs to the tetrahydrofolate dehydrogenase/cyclohydrolase family. Homodimer.

The enzyme catalyses (6R)-5,10-methylene-5,6,7,8-tetrahydrofolate + NADP(+) = (6R)-5,10-methenyltetrahydrofolate + NADPH. It carries out the reaction (6R)-5,10-methenyltetrahydrofolate + H2O = (6R)-10-formyltetrahydrofolate + H(+). Its pathway is one-carbon metabolism; tetrahydrofolate interconversion. Catalyzes the oxidation of 5,10-methylenetetrahydrofolate to 5,10-methenyltetrahydrofolate and then the hydrolysis of 5,10-methenyltetrahydrofolate to 10-formyltetrahydrofolate. This Erythrobacter litoralis (strain HTCC2594) protein is Bifunctional protein FolD.